The chain runs to 262 residues: Tryptophan synthase alpha chain (262 aa).

Active-site proton acceptor residues include glutamate 48 and aspartate 59.

The protein belongs to the TrpA family. Tetramer of two alpha and two beta chains.

It carries out the reaction (1S,2R)-1-C-(indol-3-yl)glycerol 3-phosphate + L-serine = D-glyceraldehyde 3-phosphate + L-tryptophan + H2O. The protein operates within amino-acid biosynthesis; L-tryptophan biosynthesis; L-tryptophan from chorismate: step 5/5. In terms of biological role, the alpha subunit is responsible for the aldol cleavage of indoleglycerol phosphate to indole and glyceraldehyde 3-phosphate. This Helicobacter pylori (strain Shi470) protein is Tryptophan synthase alpha chain.